Consider the following 362-residue polypeptide: Chorismate synthase (362 aa).

Positions 48 and 54 each coordinate NADP(+). FMN is bound by residues 125–127 (RSS), 238–239 (NA), Gly278, 293–297 (KPTSS), and Arg319.

Belongs to the chorismate synthase family. As to quaternary structure, homotetramer. FMNH2 serves as cofactor.

It carries out the reaction 5-O-(1-carboxyvinyl)-3-phosphoshikimate = chorismate + phosphate. It functions in the pathway metabolic intermediate biosynthesis; chorismate biosynthesis; chorismate from D-erythrose 4-phosphate and phosphoenolpyruvate: step 7/7. Its function is as follows. Catalyzes the anti-1,4-elimination of the C-3 phosphate and the C-6 proR hydrogen from 5-enolpyruvylshikimate-3-phosphate (EPSP) to yield chorismate, which is the branch point compound that serves as the starting substrate for the three terminal pathways of aromatic amino acid biosynthesis. This reaction introduces a second double bond into the aromatic ring system. In Psychromonas ingrahamii (strain DSM 17664 / CCUG 51855 / 37), this protein is Chorismate synthase.